Here is a 505-residue protein sequence, read N- to C-terminus: Deoxyguanosinetriphosphate triphosphohydrolase (505 aa).

In terms of domain architecture, HD spans 66 to 273; the sequence is RLTHSMEVQQ…MEAADDISYC (208 aa).

Belongs to the dGTPase family. Type 1 subfamily. Homotetramer. It depends on Mg(2+) as a cofactor.

The enzyme catalyses dGTP + H2O = 2'-deoxyguanosine + triphosphate + H(+). DGTPase preferentially hydrolyzes dGTP over the other canonical NTPs. The protein is Deoxyguanosinetriphosphate triphosphohydrolase of Escherichia coli O17:K52:H18 (strain UMN026 / ExPEC).